A 44-amino-acid chain; its full sequence is Photosystem I reaction center subunit IX (44 aa).

The chain crosses the membrane as a helical span at residues 7–27; sequence YLSVAPVLSTLSLGFLTGFLI.

Belongs to the PsaJ family.

The protein resides in the plastid membrane. Functionally, may help in the organization of the PsaE and PsaF subunits. This Cuscuta gronovii (Common dodder) protein is Photosystem I reaction center subunit IX.